We begin with the raw amino-acid sequence, 392 residues long: Probable tRNA sulfurtransferase (392 aa).

One can recognise a THUMP domain in the interval 59–166 (DEIIERVKKV…ECSFVFTKKV (108 aa)). Residues 183 to 184 (LL), 208 to 209 (HF), arginine 265, glycine 287, and glutamine 296 each bind ATP.

It belongs to the ThiI family.

The protein localises to the cytoplasm. It catalyses the reaction [ThiI sulfur-carrier protein]-S-sulfanyl-L-cysteine + a uridine in tRNA + 2 reduced [2Fe-2S]-[ferredoxin] + ATP + H(+) = [ThiI sulfur-carrier protein]-L-cysteine + a 4-thiouridine in tRNA + 2 oxidized [2Fe-2S]-[ferredoxin] + AMP + diphosphate. The catalysed reaction is [ThiS sulfur-carrier protein]-C-terminal Gly-Gly-AMP + S-sulfanyl-L-cysteinyl-[cysteine desulfurase] + AH2 = [ThiS sulfur-carrier protein]-C-terminal-Gly-aminoethanethioate + L-cysteinyl-[cysteine desulfurase] + A + AMP + 2 H(+). The protein operates within cofactor biosynthesis; thiamine diphosphate biosynthesis. Functionally, catalyzes the ATP-dependent transfer of a sulfur to tRNA to produce 4-thiouridine in position 8 of tRNAs, which functions as a near-UV photosensor. Also catalyzes the transfer of sulfur to the sulfur carrier protein ThiS, forming ThiS-thiocarboxylate. This is a step in the synthesis of thiazole, in the thiamine biosynthesis pathway. The sulfur is donated as persulfide by IscS. The polypeptide is Probable tRNA sulfurtransferase (Alkaliphilus metalliredigens (strain QYMF)).